A 268-amino-acid chain; its full sequence is Homeobox protein Hox-D12 (268 aa).

The disordered stretch occupies residues 102–124; it reads TPDAPTASEERSRTRPPFAPESS. Positions 200 to 259 form a DNA-binding region, homeobox; the sequence is ARKKRKPYTKQQIAELENEFLVNEFINRQKRKELSNRLNLSDQQVKIWFQNRRMKKKRVV.

Belongs to the Abd-B homeobox family.

It is found in the nucleus. In terms of biological role, sequence-specific transcription factor which is part of a developmental regulatory system that provides cells with specific positional identities on the anterior-posterior axis. The chain is Homeobox protein Hox-D12 (Hoxd12) from Mus musculus (Mouse).